Consider the following 228-residue polypeptide: Urease accessory protein UreF (228 aa).

Belongs to the UreF family. In terms of assembly, ureD, UreF and UreG form a complex that acts as a GTP-hydrolysis-dependent molecular chaperone, activating the urease apoprotein by helping to assemble the nickel containing metallocenter of UreC. The UreE protein probably delivers the nickel.

It is found in the cytoplasm. Functionally, required for maturation of urease via the functional incorporation of the urease nickel metallocenter. The chain is Urease accessory protein UreF from Blochmanniella pennsylvanica (strain BPEN).